Reading from the N-terminus, the 226-residue chain is Phospholipase Culp4 (226 aa).

A signal peptide spans 1 to 45; sequence MIPRPQPHSGRWRAGAARRLTSLVAAAFAAATLLLTPALAPPASA. Cysteines 47 and 117 form a disulfide. Ser-128 serves as the catalytic Nucleophile. Cys-191 and Cys-198 are disulfide-bonded. Asp-195 is an active-site residue. His-207 serves as the catalytic Proton donor/acceptor.

The protein belongs to the cutinase family. Homodimer.

It localises to the cell membrane. The protein resides in the secreted. It is found in the cell wall. It carries out the reaction 1,2-dihexadecanoyl-sn-glycero-3-phosphocholine + H2O = 1-hexadecanoyl-sn-glycero-3-phosphocholine + hexadecanoate + H(+). The enzyme catalyses a butanoate ester + H2O = an aliphatic alcohol + butanoate + H(+). Its activity is regulated as follows. Inhibited by high concentrations of paraoxon. Inhibited by tetrahydrolipstatin (THL), a specific lipase inhibitor. In terms of biological role, A2-type phospholipase, which is probably involved in the degradation of macrophage membrane. Hydrolyzes dipalmitoylphosphatidylcholine. Also shows moderate esterase activity and hydrolyzes the p-nitrophenol-linked aliphatic ester pNP-butyrate (C4). Does not exhibit cutinase activity. This chain is Phospholipase Culp4, found in Mycobacterium tuberculosis (strain ATCC 25618 / H37Rv).